The following is a 316-amino-acid chain: L-lactate dehydrogenase (316 aa).

Residues V15, D37, K42, Y68, and 82-83 (GL) each bind NAD(+). Substrate-binding positions include Q85, R91, and 123 to 126 (NPVD). NAD(+) contacts are provided by residues 121–123 (ASN) and T146. 151–154 (DTSR) provides a ligand contact to substrate. Beta-D-fructose 1,6-bisphosphate-binding residues include R156 and H171. The active-site Proton acceptor is the H178. A Phosphotyrosine modification is found at Y222. T231 contributes to the substrate binding site.

The protein belongs to the LDH/MDH superfamily. LDH family. Homotetramer.

It localises to the cytoplasm. The enzyme catalyses (S)-lactate + NAD(+) = pyruvate + NADH + H(+). Its pathway is fermentation; pyruvate fermentation to lactate; (S)-lactate from pyruvate: step 1/1. With respect to regulation, allosterically activated by fructose 1,6-bisphosphate (FBP). Functionally, catalyzes the conversion of lactate to pyruvate. This Borrelia garinii subsp. bavariensis (strain ATCC BAA-2496 / DSM 23469 / PBi) (Borreliella bavariensis) protein is L-lactate dehydrogenase.